Reading from the N-terminus, the 374-residue chain is Tomoregulin-2 (374 aa).

The signal sequence occupies residues 1–39 (MVLWESPRQCSSWTLCEGFCWLLLLPVMLLIVARPVKLA). At 40-320 (AFPTSLSDCQ…VPGPVRFQYV (281 aa)) the chain is on the extracellular side. Asparagine 55 carries an N-linked (GlcNAc...) asparagine glycan. Kazal-like domains lie at 90-137 (VCQF…SCAT) and 181-229 (VCNI…RCQD). 9 disulfides stabilise this stretch: cysteine 91–cysteine 121, cysteine 95–cysteine 114, cysteine 103–cysteine 135, cysteine 182–cysteine 213, cysteine 186–cysteine 206, cysteine 195–cysteine 227, cysteine 265–cysteine 278, cysteine 273–cysteine 289, and cysteine 291–cysteine 300. The EGF-like domain maps to 261–301 (HHIPCPEHYNGFCMHGKCEHSINMQEPSCRCDAGYTGQHCE). Residues 303 to 320 (KDYSVLYVVPGPVRFQYV) are required for shedding. Residues 321 to 341 (LIAAVIGTIQIAVICVVVLCI) form a helical membrane-spanning segment. The Cytoplasmic portion of the chain corresponds to 342-374 (TRKCPRSNRIHRQKQNTGHYSSDNTTRASTRLI). Positions 353–374 (RQKQNTGHYSSDNTTRASTRLI) are disordered. Residues 356-374 (QNTGHYSSDNTTRASTRLI) show a composition bias toward polar residues.

The protein belongs to the tomoregulin family. In terms of processing, O-glycosylated; contains chondroitin sulfate glycosaminoglycans. Post-translationally, a soluble form (TMEFF2-ECD) is produced by proteolytic shedding. This shedding can be induced by phorbol ester or pro-inflammatory cytokines such as TNFalpha, and is mediated by a metalloproteinase ADAM.

It localises to the membrane. Its function is as follows. May be a survival factor for hippocampal and mesencephalic neurons. The shedded form may up-regulate cell proliferation. This is Tomoregulin-2 (TMEFF2) from Bos taurus (Bovine).